Reading from the N-terminus, the 327-residue chain is GMP reductase (327 aa).

The active-site Thioimidate intermediate is C175. 204 to 227 provides a ligand contact to NADP(+); sequence IIADGGIRTPGDIAKSIRFGATMV.

Belongs to the IMPDH/GMPR family. GuaC type 2 subfamily.

The catalysed reaction is IMP + NH4(+) + NADP(+) = GMP + NADPH + 2 H(+). In terms of biological role, catalyzes the irreversible NADPH-dependent deamination of GMP to IMP. It functions in the conversion of nucleobase, nucleoside and nucleotide derivatives of G to A nucleotides, and in maintaining the intracellular balance of A and G nucleotides. The polypeptide is GMP reductase (Clostridium acetobutylicum (strain ATCC 824 / DSM 792 / JCM 1419 / IAM 19013 / LMG 5710 / NBRC 13948 / NRRL B-527 / VKM B-1787 / 2291 / W)).